We begin with the raw amino-acid sequence, 271 residues long: Phosphate import ATP-binding protein PstB 2 (271 aa).

In terms of domain architecture, ABC transporter spans 25–266 (MATEDLHVYY…PQQKQTEDYI (242 aa)). 57 to 64 (GPSGCGKS) contributes to the ATP binding site.

It belongs to the ABC transporter superfamily. Phosphate importer (TC 3.A.1.7) family. The complex is composed of two ATP-binding proteins (PstB), two transmembrane proteins (PstC and PstA) and a solute-binding protein (PstS).

The protein resides in the cell membrane. The enzyme catalyses phosphate(out) + ATP + H2O = ADP + 2 phosphate(in) + H(+). Functionally, part of the ABC transporter complex PstSACB involved in phosphate import. Responsible for energy coupling to the transport system. The protein is Phosphate import ATP-binding protein PstB 2 of Listeria monocytogenes serotype 4b (strain F2365).